Reading from the N-terminus, the 429-residue chain is L-dopachrome tautomerase yellow-f (429 aa).

Residues 1–23 (MLSLDVLLLCAISGFQLLISADG) form the signal peptide. N-linked (GlcNAc...) asparagine glycans are attached at residues Asn133 and Asn372.

The protein belongs to the major royal jelly protein family.

Its subcellular location is the secreted. It carries out the reaction L-dopachrome = 5,6-dihydroxyindole-2-carboxylate. It participates in pigment biosynthesis; melanin biosynthesis. In terms of biological role, tautomerization of L-dopachrome with decarboxylation to give 5,6-dihydroxyindole (DHI). Also catalyzes the tautomerization of the methyl ester of L-dopachrome and dopamine chrome. May play a role in melanization reactions during late pupal and adult stages. May play a role in melanization reactions during larval and early pupal stages. The sequence is that of L-dopachrome tautomerase yellow-f from Drosophila melanogaster (Fruit fly).